The chain runs to 944 residues: Breast cancer type 2 susceptibility protein homolog (944 aa).

2 stretches are compositionally biased toward basic and acidic residues: residues 325 to 348 (KKVKLEPSSQKEQKSSKDSNESKI) and 415 to 431 (NSIKRNDEEQPEKETPN). Disordered regions lie at residues 325–354 (KKVKLEPSSQKEQKSSKDSNESKIRAASCD) and 415–440 (NSIKRNDEEQPEKETPNKSRSTSSHQ). BRCA2 repeat units lie at residues 543 to 577 (AEPEFCGFRTASNKAIPISEKMKIKTAEFMAEFQS), 644 to 678 (NESQFFGFRTASNKAIEITEAMEKRGAMFLAQSRA), and 719 to 753 (SETEFFGFRTASNKGIVISENTKKKVAQFMSEFQA). Disordered regions lie at residues 823-854 (LCSQPLVRTPRRSQEIHSSLSQLAGQSPLDQA) and 876-944 (SSTE…RSRY). 2 stretches are compositionally biased toward polar residues: residues 838–852 (IHSSLSQLAGQSPLD) and 876–885 (SSTETSTSCA). Positions 904-921 (ADRDLNRSKDCAKNRQDA) are enriched in basic and acidic residues. Basic residues predominate over residues 932–944 (KKSRRLGLSRSRY).

Interacts with Rad9 and spn-A/Rad51.

It is found in the nucleus. Its function is as follows. Involved in and required for double-strand break repair by meiotic and mitotic homologous recombination. During meiosis, has a dual role in the repair of meiotic double-stranded breaks and the efficient activation of the meiotic recombination checkpoint. The chain is Breast cancer type 2 susceptibility protein homolog from Drosophila simulans (Fruit fly).